Reading from the N-terminus, the 499-residue chain is Xylulose kinase (499 aa).

Residue 81–82 (MH) coordinates substrate. Residue D239 is the Proton acceptor of the active site.

This sequence belongs to the FGGY kinase family.

The catalysed reaction is D-xylulose + ATP = D-xylulose 5-phosphate + ADP + H(+). In terms of biological role, catalyzes the phosphorylation of D-xylulose to D-xylulose 5-phosphate. The sequence is that of Xylulose kinase from Bacillus subtilis (strain 168).